The following is a 471-amino-acid chain: Methyltransferase OMS1, mitochondrial (471 aa).

The N-terminal 39 residues, 1-39, are a transit peptide targeting the mitochondrion; it reads MIVFRRFPTCLLHHIRQPASRSLLLESQRRSLSFTSYKY. Topologically, residues 40–103 are mitochondrial matrix; that stretch reads NSSHIDDDKS…AIARSEKFSK (64 aa). The helical transmembrane segment at 104-123 threads the bilayer; the sequence is GMTKYMIGAYVIFLIYGLFF. The Mitochondrial intermembrane portion of the chain corresponds to 124–471; it reads TKKLFAKDKE…LEPVPPVSKS (348 aa). A compositionally biased stretch (basic and acidic residues) spans 450–463; that stretch reads FEKKDDMASKKELE. The interval 450 to 471 is disordered; the sequence is FEKKDDMASKKELEPVPPVSKS.

This sequence belongs to the methyltransferase superfamily. METL family.

It localises to the mitochondrion inner membrane. Mitochondrial methyltransferase which suppresses respiratory defects caused by OXA1 mutations when overexpressed. In Saccharomyces cerevisiae (strain ATCC 204508 / S288c) (Baker's yeast), this protein is Methyltransferase OMS1, mitochondrial (OMS1).